Here is an 872-residue protein sequence, read N- to C-terminus: DNA mismatch repair protein MutS (872 aa).

622-629 (GPNMAGKS) contacts ATP.

Belongs to the DNA mismatch repair MutS family.

This protein is involved in the repair of mismatches in DNA. It is possible that it carries out the mismatch recognition step. This protein has a weak ATPase activity. This is DNA mismatch repair protein MutS from Geobacter metallireducens (strain ATCC 53774 / DSM 7210 / GS-15).